We begin with the raw amino-acid sequence, 352 residues long: UPF0252 protein MJ1282 (352 aa).

This sequence belongs to the UPF0252 family.

The polypeptide is UPF0252 protein MJ1282 (Methanocaldococcus jannaschii (strain ATCC 43067 / DSM 2661 / JAL-1 / JCM 10045 / NBRC 100440) (Methanococcus jannaschii)).